The primary structure comprises 307 residues: Membrane protein insertase YidC 2 (307 aa).

A signal peptide spans 1-23; that stretch reads MKLTLNRILFSGLALSILFTLTG. A lipid anchor (N-palmitoyl cysteine) is attached at Cys-24. Residue Cys-24 is the site of S-diacylglycerol cysteine attachment. 5 consecutive transmembrane segments (helical) span residues 58-78, 135-155, 179-199, 209-225, and 231-251; these read LGYG…ILPL, LGGI…AMYF, VLTA…MMAV, TMMY…SFSL, and LYWL…TYLL. The interval 263-307 is disordered; the sequence is YAKTPPKAYQSTSSRKDVTPSQNMEQANLPKKIKSNRNAGKQRKR. Polar residues predominate over residues 271 to 288; sequence YQSTSSRKDVTPSQNMEQ. Over residues 293–307 the composition is skewed to basic residues; that stretch reads KKIKSNRNAGKQRKR.

This sequence belongs to the OXA1/ALB3/YidC family. Type 2 subfamily.

It is found in the cell membrane. In terms of biological role, required for the insertion and/or proper folding and/or complex formation of integral membrane proteins into the membrane. Involved in integration of membrane proteins that insert both dependently and independently of the Sec translocase complex, as well as at least some lipoproteins. In Streptococcus pyogenes serotype M18 (strain MGAS8232), this protein is Membrane protein insertase YidC 2.